The primary structure comprises 61 residues: Small ribosomal subunit protein uS14 (61 aa).

Residues Cys-24, Cys-27, Cys-40, and Cys-43 each contribute to the Zn(2+) site.

The protein belongs to the universal ribosomal protein uS14 family. Zinc-binding uS14 subfamily. As to quaternary structure, part of the 30S ribosomal subunit. Contacts proteins S3 and S10. Zn(2+) serves as cofactor.

In terms of biological role, binds 16S rRNA, required for the assembly of 30S particles and may also be responsible for determining the conformation of the 16S rRNA at the A site. The protein is Small ribosomal subunit protein uS14 of Brevibacillus brevis (strain 47 / JCM 6285 / NBRC 100599).